The sequence spans 219 residues: Tritrans,polycis-undecaprenyl-diphosphate synthase (geranylgeranyl-diphosphate specific) (219 aa).

The active site involves Asp12. Asp12 is a Mg(2+) binding site. Residues 13–16 (GNRR), Trp17, and 59–61 (SRD) each bind substrate. The active-site Proton acceptor is the Asn62. Residues Arg66, Arg168, and 174-176 (RLS) contribute to the substrate site. Glu187 is a Mg(2+) binding site.

Belongs to the UPP synthase family. In terms of assembly, homodimer. The cofactor is Mg(2+).

It catalyses the reaction geranylgeranyl diphosphate + 7 isopentenyl diphosphate = tri-trans,hepta-cis-undecaprenyl diphosphate + 7 diphosphate. In terms of biological role, catalyzes the sequential condensation of isopentenyl diphosphate (IPP) with geranylgeranyl diphosphate (GGPP) to yield (2Z,6Z,10Z,14Z,18Z,22Z,26Z,30E,34E,38E)-undecaprenyl diphosphate (tritrans,heptacis-UPP). It is probably the precursor of glycosyl carrier lipids. The chain is Tritrans,polycis-undecaprenyl-diphosphate synthase (geranylgeranyl-diphosphate specific) from Aeropyrum pernix (strain ATCC 700893 / DSM 11879 / JCM 9820 / NBRC 100138 / K1).